A 130-amino-acid polypeptide reads, in one-letter code: Protein ApaG (130 aa).

In terms of domain architecture, ApaG spans 3 to 127 (SAVTRGIEVT…FSLDVPEQRR (125 aa)).

This chain is Protein ApaG, found in Brucella suis biovar 1 (strain 1330).